The chain runs to 205 residues: Large ribosomal subunit protein uL4 (205 aa).

This sequence belongs to the universal ribosomal protein uL4 family. In terms of assembly, part of the 50S ribosomal subunit. Contacts proteins L15 and L34.

Its function is as follows. One of the primary rRNA binding proteins, this protein initially binds near the 5'-end of the 23S rRNA. It is important during the early stages of 50S assembly. In terms of biological role, makes multiple contacts with different domains of the 23S rRNA in the assembled 50S subunit. Functionally, this protein is located close to the polypeptide exit tunnel, and interacts with the modified macrolide azithromycin, which blocks the tunnel. The protein is Large ribosomal subunit protein uL4 (rplD) of Deinococcus radiodurans (strain ATCC 13939 / DSM 20539 / JCM 16871 / CCUG 27074 / LMG 4051 / NBRC 15346 / NCIMB 9279 / VKM B-1422 / R1).